We begin with the raw amino-acid sequence, 54 residues long: UPF0391 membrane protein Aave_3864 (54 aa).

The next 2 helical transmembrane spans lie at 5–25 and 28–48; these read AVVF…GIAA and VGIA…TFVL.

This sequence belongs to the UPF0391 family.

Its subcellular location is the cell membrane. This chain is UPF0391 membrane protein Aave_3864, found in Paracidovorax citrulli (strain AAC00-1) (Acidovorax citrulli).